Consider the following 1622-residue polypeptide: WD repeat-containing protein 97 (1622 aa).

6 WD repeats span residues 187-233 (SEQG…RRLV), 290-329 (LHKTTISDLAYCEEVEAMVTASRDSTVKVWEADWQIRMVF), 331-370 (GHTGPVTAMTVLPNTTLVLSASQDGTLRTWDLQAAAQVGE), 552-592 (ELRC…TVFQ), 594-633 (EAHSPGPVVAIASTWNSIVSSGGDLTVKMWRVFPYAEESL), and 687-726 (DPTDHITGLCCCPTLKLYACSSLDCTVRIWTAENRLLRLL). Disordered regions lie at residues 1090-1112 (GEKPGEEGEEDKKEEEEEKEDEE) and 1453-1472 (LHPAGPAQLPGEPPPLEETD). A coiled-coil region spans residues 1094 to 1118 (GEEGEEDKKEEEEEKEDEELDWALA). The segment covering 1096-1112 (EGEEDKKEEEEEKEDEE) has biased composition (acidic residues).

The chain is WD repeat-containing protein 97 from Homo sapiens (Human).